The primary structure comprises 329 residues: 4-hydroxythreonine-4-phosphate dehydrogenase (329 aa).

Substrate is bound by residues His-136 and Thr-137. The a divalent metal cation site is built by His-166, His-211, and His-266. 3 residues coordinate substrate: Lys-274, Asn-283, and Arg-292.

It belongs to the PdxA family. In terms of assembly, homodimer. Zn(2+) is required as a cofactor. It depends on Mg(2+) as a cofactor. Requires Co(2+) as cofactor.

It is found in the cytoplasm. The catalysed reaction is 4-(phosphooxy)-L-threonine + NAD(+) = 3-amino-2-oxopropyl phosphate + CO2 + NADH. Its pathway is cofactor biosynthesis; pyridoxine 5'-phosphate biosynthesis; pyridoxine 5'-phosphate from D-erythrose 4-phosphate: step 4/5. Its function is as follows. Catalyzes the NAD(P)-dependent oxidation of 4-(phosphooxy)-L-threonine (HTP) into 2-amino-3-oxo-4-(phosphooxy)butyric acid which spontaneously decarboxylates to form 3-amino-2-oxopropyl phosphate (AHAP). The protein is 4-hydroxythreonine-4-phosphate dehydrogenase of Escherichia coli (strain SE11).